We begin with the raw amino-acid sequence, 525 residues long: Bifunctional purine biosynthesis protein PurH (525 aa).

The MGS-like domain occupies 10–156 (HRIPIRRALV…KNHPSVAIVT (147 aa)).

Belongs to the PurH family.

The catalysed reaction is (6R)-10-formyltetrahydrofolate + 5-amino-1-(5-phospho-beta-D-ribosyl)imidazole-4-carboxamide = 5-formamido-1-(5-phospho-D-ribosyl)imidazole-4-carboxamide + (6S)-5,6,7,8-tetrahydrofolate. The enzyme catalyses IMP + H2O = 5-formamido-1-(5-phospho-D-ribosyl)imidazole-4-carboxamide. The protein operates within purine metabolism; IMP biosynthesis via de novo pathway; 5-formamido-1-(5-phospho-D-ribosyl)imidazole-4-carboxamide from 5-amino-1-(5-phospho-D-ribosyl)imidazole-4-carboxamide (10-formyl THF route): step 1/1. Its pathway is purine metabolism; IMP biosynthesis via de novo pathway; IMP from 5-formamido-1-(5-phospho-D-ribosyl)imidazole-4-carboxamide: step 1/1. The polypeptide is Bifunctional purine biosynthesis protein PurH (Nocardioides sp. (strain ATCC BAA-499 / JS614)).